The chain runs to 407 residues: Argininosuccinate synthase (407 aa).

ATP contacts are provided by residues 10 to 18 (AYSGGLDTS) and alanine 37. Tyrosine 88 and serine 93 together coordinate L-citrulline. Glycine 118 provides a ligand contact to ATP. L-aspartate-binding residues include threonine 120, asparagine 124, and aspartate 125. Asparagine 124 provides a ligand contact to L-citrulline. Residues arginine 128, serine 179, serine 188, glutamate 264, and tyrosine 276 each contribute to the L-citrulline site.

The protein belongs to the argininosuccinate synthase family. Type 1 subfamily. As to quaternary structure, homotetramer.

The protein resides in the cytoplasm. The enzyme catalyses L-citrulline + L-aspartate + ATP = 2-(N(omega)-L-arginino)succinate + AMP + diphosphate + H(+). Its pathway is amino-acid biosynthesis; L-arginine biosynthesis; L-arginine from L-ornithine and carbamoyl phosphate: step 2/3. The chain is Argininosuccinate synthase from Jannaschia sp. (strain CCS1).